The sequence spans 324 residues: Phospho-N-acetylmuramoyl-pentapeptide-transferase (324 aa).

10 helical membrane passes run 9–29, 53–73, 77–97, 117–137, 147–167, 176–196, 201–221, 227–247, 253–273, and 304–324; these read TFAV…PFLV, TMGA…FSFI, VSAA…LGFL, FLGQ…NDFA, IEVD…VGFS, LDGL…VIAF, MDVA…LLFN, IFMG…ISIL, LLLL…LQVF, and VLTF…VVIF.

It belongs to the glycosyltransferase 4 family. MraY subfamily. It depends on Mg(2+) as a cofactor.

It is found in the cell membrane. The catalysed reaction is UDP-N-acetyl-alpha-D-muramoyl-L-alanyl-gamma-D-glutamyl-meso-2,6-diaminopimeloyl-D-alanyl-D-alanine + di-trans,octa-cis-undecaprenyl phosphate = di-trans,octa-cis-undecaprenyl diphospho-N-acetyl-alpha-D-muramoyl-L-alanyl-D-glutamyl-meso-2,6-diaminopimeloyl-D-alanyl-D-alanine + UMP. It functions in the pathway cell wall biogenesis; peptidoglycan biosynthesis. Catalyzes the initial step of the lipid cycle reactions in the biosynthesis of the cell wall peptidoglycan: transfers peptidoglycan precursor phospho-MurNAc-pentapeptide from UDP-MurNAc-pentapeptide onto the lipid carrier undecaprenyl phosphate, yielding undecaprenyl-pyrophosphoryl-MurNAc-pentapeptide, known as lipid I. In Listeria monocytogenes serovar 1/2a (strain ATCC BAA-679 / EGD-e), this protein is Phospho-N-acetylmuramoyl-pentapeptide-transferase.